Reading from the N-terminus, the 915-residue chain is Phototropin-2 (915 aa).

Over residues 1-10 (MERPRAPPSP) the composition is skewed to pro residues. Disordered stretches follow at residues 1-62 (MERP…EFQD) and 84-118 (DDGI…GAFP). Phosphoserine is present on residues serine 9 and serine 22. The segment covering 27–43 (NPSSGKETHGSTSSSSK) has biased composition (polar residues). Residues 93–107 (SEVERSKNMSRRSSE) are compositionally biased toward basic and acidic residues. One can recognise a PAS 1 domain in the interval 120 to 193 (VSQELKTALS…AKIRDCVKNG (74 aa)). Position 121 is a phosphoserine (serine 121). Asparagine 169 contributes to the FMN binding site. Residue cysteine 170 is modified to S-4a-FMN cysteine. The FMN site is built by arginine 171, glutamine 174, arginine 187, asparagine 202, asparagine 212, glutamine 233, and lysine 238. The PAC 1 domain occupies 194–248 (KSYCGRLLNYKKDGTPFWNLLTVTPIKDDQGNTIKFIGMQVEVSKYTEGVNDKAL). Residues 281–344 (HRKSQVQESV…KSSNNRHEDL (64 aa)) are disordered. Composition is skewed to polar residues over residues 286–310 (VQES…GRQT) and 325–337 (RVST…LKSS). Phosphoserine is present on serine 364. A PAS 2 domain is found at 376–449 (QGIDLATTLE…QKIRDAIRDQ (74 aa)). Asparagine 425 contributes to the FMN binding site. Cysteine 426 is subject to S-4a-FMN cysteine. FMN contacts are provided by arginine 427, glutamine 430, arginine 443, asparagine 458, asparagine 468, phenylalanine 470, and glutamine 489. The PAC 2 domain maps to 450 to 504 (REITVQLINYTKSGKKFWNLFHLQPMRDQKGELQYFIGVQLDGSDHVEPLQNRLS). The Protein kinase domain occupies 577 to 864 (FKPIKPLGSG…ANEIKQHAFF (288 aa)). ATP contacts are provided by residues 583-591 (LGSGDTGSV) and lysine 606. Catalysis depends on aspartate 702, which acts as the Proton acceptor. Residues 720–774 (DFDLSFMTTCTPQLIIPAAPSKRRRSKSQPLPTFVAEPSTQSNSFVGTEEYIAPE) form an activation loop region.

Belongs to the protein kinase superfamily. AGC Ser/Thr protein kinase family. In terms of assembly, homodimer. Interacts with PKS1, PKS2, RPT3 and PHOT1. Associates with CBC1 and CBC2. Binds to BHP. Requires FMN as cofactor. In terms of processing, autophosphorylated in response to blue light irradiation. Post-translationally, 2 molecules of FMN bind covalently to cysteines after exposure to blue light and are reversed in the dark. Expressed in leaves, stems and flowers, and to a lower extent in roots. Present in guard cells (at protein level).

Its subcellular location is the cell membrane. It carries out the reaction L-seryl-[protein] + ATP = O-phospho-L-seryl-[protein] + ADP + H(+). The catalysed reaction is L-threonyl-[protein] + ATP = O-phospho-L-threonyl-[protein] + ADP + H(+). Autophosphorylation is inhibited by staurosporine, but not by tyrphostin 9, sphingosine, GW5074 and BML-265. Functionally, protein kinase that acts as a blue light photoreceptor in a signal-transduction pathway for photo-induced movements. Triggers the phosphorylation of AHA1 and AHA2 C-terminal penultimate Thr in guard cells to activate them and induce stomatal opening in response to blue light (BL). Also phosphorylates BLUS1, a kinase involved in stomatal opening. Mediates calcium spiking of extra- and intracellular origins in response to blue light. Involved in hypocotyl phototropism. Contributes to the chloroplast accumulation in low blue light and mediates their translocation (avoidance response) at high fluence. Regulates stomata opening and photomorphogenesis response of leaf tissue. Not involved in hypocotyl elongation inhibition, anthocyanin accumulation or cotyledon opening. The sequence is that of Phototropin-2 from Arabidopsis thaliana (Mouse-ear cress).